We begin with the raw amino-acid sequence, 186 residues long: Peptidyl-tRNA hydrolase (186 aa).

Tyr-15 contributes to the tRNA binding site. His-20 functions as the Proton acceptor in the catalytic mechanism. Tyr-64, Asn-66, and Asn-112 together coordinate tRNA.

Belongs to the PTH family. Monomer.

It is found in the cytoplasm. It carries out the reaction an N-acyl-L-alpha-aminoacyl-tRNA + H2O = an N-acyl-L-amino acid + a tRNA + H(+). Functionally, hydrolyzes ribosome-free peptidyl-tRNAs (with 1 or more amino acids incorporated), which drop off the ribosome during protein synthesis, or as a result of ribosome stalling. Its function is as follows. Catalyzes the release of premature peptidyl moieties from peptidyl-tRNA molecules trapped in stalled 50S ribosomal subunits, and thus maintains levels of free tRNAs and 50S ribosomes. This chain is Peptidyl-tRNA hydrolase, found in Azobacteroides pseudotrichonymphae genomovar. CFP2.